We begin with the raw amino-acid sequence, 154 residues long: Cyclin-dependent protein kinase inhibitor SMR11 (154 aa).

Residues 1–44 (MEQEEPCEAKETASSSIEPKTPNPNVPDSIPAIDSDSSLSEEEI) are disordered. Positions 27 to 38 (PDSIPAIDSDSS) are enriched in low complexity.

Interacts with CYCB2-4.

Probable cyclin-dependent protein kinase (CDK) inhibitor that functions as a repressor of mitosis in the endoreduplication cell cycle. The chain is Cyclin-dependent protein kinase inhibitor SMR11 from Arabidopsis thaliana (Mouse-ear cress).